Here is a 342-residue protein sequence, read N- to C-terminus: Cyclin pch1 (342 aa).

Positions 261-342 (LPIDQKNGSH…TDKEMETEAS (82 aa)) are disordered. The span at 278–314 (TPSSLASVSTQATPQHQNSSGRTDSFHSLNTETPSKS) shows a compositional bias: polar residues. Position 300 is a phosphothreonine (Thr300). The residue at position 302 (Ser302) is a Phosphoserine. The span at 329–342 (KSSDTDKEMETEAS) shows a compositional bias: basic and acidic residues.

It belongs to the cyclin family. Cyclin C subfamily. Interacts with cdc2 protein kinase and with the N-terminal domain of cdk9.

It localises to the nucleus. In terms of biological role, essential for progression through the whole cell cycle. In Schizosaccharomyces pombe (strain 972 / ATCC 24843) (Fission yeast), this protein is Cyclin pch1 (pch1).